The sequence spans 2131 residues: Protein Ycf2 (2131 aa).

ATP is bound at residue 1484–1491 (GSIGTGRS).

Belongs to the Ycf2 family.

The protein resides in the plastid. It localises to the chloroplast stroma. Probable ATPase of unknown function. Its presence in a non-photosynthetic plant (Epifagus virginiana) and experiments in tobacco indicate that it has an essential function which is probably not related to photosynthesis. This is Protein Ycf2 (ycf2-A) from Spinacia oleracea (Spinach).